A 124-amino-acid polypeptide reads, in one-letter code: Late histone H2B.2.1 (124 aa).

The segment at 1-32 (MPAKQTSGKGAKKAGKAKGRPAGASKTRRRKR) is disordered. Residues 10-19 (GAKKAGKAKG) are compositionally biased toward basic residues. The O-linked (GlcNAc) serine glycan is linked to S111. K119 participates in a covalent cross-link: Glycyl lysine isopeptide (Lys-Gly) (interchain with G-Cter in ubiquitin).

This sequence belongs to the histone H2B family. The nucleosome is a histone octamer containing two molecules each of H2A, H2B, H3 and H4 assembled in one H3-H4 heterotetramer and two H2A-H2B heterodimers. The octamer wraps approximately 147 bp of DNA. Post-translationally, monoubiquitination of Lys-119 gives a specific tag for epigenetic transcriptional activation and is also prerequisite for histone H3 'Lys-4' and 'Lys-79' methylation. GlcNAcylation at Ser-111 promotes monoubiquitination of Lys-119. It fluctuates in response to extracellular glucose, and associates with transcribed genes.

It is found in the nucleus. The protein resides in the chromosome. In terms of biological role, core component of nucleosome. Nucleosomes wrap and compact DNA into chromatin, limiting DNA accessibility to the cellular machineries which require DNA as a template. Histones thereby play a central role in transcription regulation, DNA repair, DNA replication and chromosomal stability. DNA accessibility is regulated via a complex set of post-translational modifications of histones, also called histone code, and nucleosome remodeling. This Psammechinus miliaris (Green sea urchin) protein is Late histone H2B.2.1.